The following is a 182-amino-acid chain: ADP-ribosylation factor-like protein 11 (182 aa).

G2 is lipidated: N-myristoyl glycine. Residues 19–26 (GLDSAGKT), 63–67 (DVGGQ), and 122–125 (NKQE) each bind GTP.

The protein belongs to the small GTPase superfamily. Arf family.

Its function is as follows. May play a role in apoptosis. May act as a tumor suppressor. The chain is ADP-ribosylation factor-like protein 11 (ARL11) from Bos taurus (Bovine).